We begin with the raw amino-acid sequence, 395 residues long: Na(+)/H(+) antiporter NhaA (395 aa).

11 helical membrane-spanning segments follow: residues 15-35 (FLGS…AGFV), 66-86 (IDAW…ILEI), 101-121 (VALP…TYLL), 132-152 (GWAI…LALG), 161-181 (AWLM…IAVF), 184-204 (NALY…LIGA), 219-239 (CILL…AGVI), 265-285 (ALTP…NVGV), 301-321 (LGIM…ATLL), 339-359 (VFGL…IANL), and 366-386 (LVIP…LAGW).

It belongs to the NhaA Na(+)/H(+) (TC 2.A.33) antiporter family.

It localises to the cell inner membrane. It carries out the reaction Na(+)(in) + 2 H(+)(out) = Na(+)(out) + 2 H(+)(in). Na(+)/H(+) antiporter that extrudes sodium in exchange for external protons. The sequence is that of Na(+)/H(+) antiporter NhaA from Gluconacetobacter diazotrophicus (strain ATCC 49037 / DSM 5601 / CCUG 37298 / CIP 103539 / LMG 7603 / PAl5).